Here is a 304-residue protein sequence, read N- to C-terminus: tRNA dimethylallyltransferase (304 aa).

An ATP-binding site is contributed by Gly-2–Thr-9. Position 4–9 (Thr-4–Thr-9) interacts with substrate. Interaction with substrate tRNA stretches follow at residues Asp-27–Leu-30, Gln-151–Arg-155, Arg-232–Arg-237, and Lys-265–Arg-272.

The protein belongs to the IPP transferase family. Monomer. The cofactor is Mg(2+).

It catalyses the reaction adenosine(37) in tRNA + dimethylallyl diphosphate = N(6)-dimethylallyladenosine(37) in tRNA + diphosphate. Catalyzes the transfer of a dimethylallyl group onto the adenine at position 37 in tRNAs that read codons beginning with uridine, leading to the formation of N6-(dimethylallyl)adenosine (i(6)A). The protein is tRNA dimethylallyltransferase of Actinobacillus pleuropneumoniae serotype 5b (strain L20).